Consider the following 394-residue polypeptide: Phosphopentomutase (394 aa).

Mn(2+) is bound by residues D14, D287, H292, D328, H329, and H340.

Belongs to the phosphopentomutase family. It depends on Mn(2+) as a cofactor.

It is found in the cytoplasm. It catalyses the reaction 2-deoxy-alpha-D-ribose 1-phosphate = 2-deoxy-D-ribose 5-phosphate. The enzyme catalyses alpha-D-ribose 1-phosphate = D-ribose 5-phosphate. It participates in carbohydrate degradation; 2-deoxy-D-ribose 1-phosphate degradation; D-glyceraldehyde 3-phosphate and acetaldehyde from 2-deoxy-alpha-D-ribose 1-phosphate: step 1/2. Its function is as follows. Isomerase that catalyzes the conversion of deoxy-ribose 1-phosphate (dRib-1-P) and ribose 1-phosphate (Rib-1-P) to deoxy-ribose 5-phosphate (dRib-5-P) and ribose 5-phosphate (Rib-5-P), respectively. This Listeria innocua serovar 6a (strain ATCC BAA-680 / CLIP 11262) protein is Phosphopentomutase.